The primary structure comprises 442 residues: QWRF motif-containing protein 6 (442 aa).

Disordered regions lie at residues 1 to 144 (MEAK…LSQQ) and 221 to 240 (FSRLGLPLPPMAPKVPADTK). Residues 57–66 (KQHHLQHHQI) show a composition bias toward basic residues. A compositionally biased stretch (basic and acidic residues) spans 80 to 89 (KMADGDENRS). Residues 264-267 (QWRF) carry the QWRF motif motif.

Belongs to the QWRF family.

This chain is QWRF motif-containing protein 6 (QWRF6), found in Arabidopsis thaliana (Mouse-ear cress).